The following is a 107-amino-acid chain: Acetyl-CoA acetyltransferase (107 aa).

The active-site Acyl-thioester intermediate is the Cys88.

The protein belongs to the thiolase-like superfamily. Thiolase family. As to quaternary structure, homotetramer.

Its subcellular location is the cytoplasm. It catalyses the reaction 2 acetyl-CoA = acetoacetyl-CoA + CoA. Catalyzes the condensation of two molecules of acetyl-CoA to produce acetoacetyl-CoA. The sequence is that of Acetyl-CoA acetyltransferase (thi) from Clostridioides difficile (Peptoclostridium difficile).